The sequence spans 399 residues: Lipase member K (399 aa).

The signal sequence occupies residues 1–19 (MWQLLAAACWMLLLGSMYG). One can recognise an AB hydrolase-1 domain in the interval 78–378 (PAVYLQHGLI…HYNHVDFYLG (301 aa)). Catalysis depends on serine 172, which acts as the Nucleophile. Cysteines 246 and 255 form a disulfide. 2 N-linked (GlcNAc...) asparagine glycosylation sites follow: asparagine 271 and asparagine 327. Catalysis depends on charge relay system residues aspartate 343 and histidine 372.

Belongs to the AB hydrolase superfamily. Lipase family. In terms of tissue distribution, exclusively expressed in the epidermis within the granular keratinocytes.

Its subcellular location is the secreted. Plays a highly specific role in the last step of keratinocyte differentiation. May have an essential function in lipid metabolism of the most differentiated epidermal layers. This is Lipase member K (LIPK) from Homo sapiens (Human).